The primary structure comprises 316 residues: MTNLFEHINLHPSDDRGHLLTEQVNPKSECLDQLSTESLVTLFCEEDREPQRAVAAAIPELIQAVEAITDRLRSGGRLFYLGAGTSGRLGVLDAAECPPTFCSDPDLVQGVLAGGSSALLKSSEGLEDIEQAGQKDLQQRGFSSADCLVGIAAGGTTPYVKGGLAYAKEINALAIAISCVPIEQAELPCSIDIRLLTGPELLTGSTRLKAGTATKMALNILSTCAMVRLGKVFGNRMVDVAATNIKLMDRALRILHDLADVDRDRGSELLQASDGSVKVALLMHACGLDAEAAQKLLIEQNNQLRTALASCGNCIS.

In terms of domain architecture, SIS spans 68 to 231 (ITDRLRSGGR…STCAMVRLGK (164 aa)). Glu96 serves as the catalytic Proton donor. The active site involves Glu127.

It belongs to the GCKR-like family. MurNAc-6-P etherase subfamily. In terms of assembly, homodimer.

The enzyme catalyses N-acetyl-D-muramate 6-phosphate + H2O = N-acetyl-D-glucosamine 6-phosphate + (R)-lactate. Its pathway is amino-sugar metabolism; N-acetylmuramate degradation. In terms of biological role, specifically catalyzes the cleavage of the D-lactyl ether substituent of MurNAc 6-phosphate, producing GlcNAc 6-phosphate and D-lactate. The sequence is that of N-acetylmuramic acid 6-phosphate etherase from Prochlorococcus marinus (strain MIT 9303).